The chain runs to 916 residues: MTQPTIKIGLWMHRGLTRGSEELRLFLSVHNIDVMLVTESHMREGQRIFLPGYSTYHVFHPSGNSRGGASVIVRSSISHSPQPPISTNDRQIAYIQLQTAEGPVVLAAVYLPPRERWIRAEFESLFAVLGNKFIAGGDYNAKHAWWGNSRACARGKVLQEVVANGQYQILATGEPTFYSYNPLVSPSALDFFVVNGYDMRRLNVQTLHELSSDHTPLLADLHAMPINKPPRSCLLARGADIERFKAYLTQHIDLSVGIQGTDDIDNAIDSFMDILKRAAIRSAPSHQQNVESSRQLQLPPIVASLIRLKRKVRREYARTGDARIQQIHSRLANRLHKVLNRRKQSQIDNLLENLDTDGSTNFSLWRITKRYKTQATPNSAIRNPAGGWCRTSREKTEVFANHLEQRFKALAFAPESHSLMVAESLQTPFQMALPADPVTLEEVKELVSKLKPKKAPGEDLLDNRTIRLLPDQALLYLVLIFNSILRVGYFPKARPTASIIMILKPGKQPLDVDSYRPTSLLPSLGKMLERLILNRILTSEEVTRAIPKFQFGFRLQHGTPEQLHRVVNFALEALEKKEYAGSCFLDIQQAFDRVWHPGLLYKAKSLLSPQLFQLIKSFWEGRKFSVTADGCRSSVKFIEAGVPQGSVLGPTLYSIFTADMPNQNAVTGLAEGEVLIATYADDIAVLTKSTCIVEATDALQEYLDAFQEWAVKWNVSINAGKCANVTFTNAIRDCPGVTINGSLLSHTHEYKYLGVILDRSLTFRRHITSLQHSFRTRITKMNWLLAARNKLSLDNKVKIYKCIVAPGLFYAIQVYGIAARTHLNKIRVLQAKMLRKISGAPWYMRTRDIECDLKVPKIGDKIREVAKKYHERLDSHPNSLARRLGVAAQRSASPRSRVRRRLKRHHPQDLLDRALT.

Residues 483–757 form the Reverse transcriptase domain; it reads SILRVGYFPK…HEYKYLGVIL (275 aa). Residues 890-916 are disordered; sequence RSASPRSRVRRRLKRHHPQDLLDRALT. Over residues 896–906 the composition is skewed to basic residues; sequence SRVRRRLKRHH. A compositionally biased stretch (basic and acidic residues) spans 907 to 916; that stretch reads PQDLLDRALT.

Mg(2+) is required as a cofactor. Requires Mn(2+) as cofactor.

The enzyme catalyses DNA(n) + a 2'-deoxyribonucleoside 5'-triphosphate = DNA(n+1) + diphosphate. Inactivated by sulphydryl reagent. The polypeptide is RNA-directed DNA polymerase from mobile element jockey (jockey\pol) (Drosophila funebris (Fruit fly)).